A 452-amino-acid polypeptide reads, in one-letter code: Phosphoglucosamine mutase (452 aa).

The Phosphoserine intermediate role is filled by Ser-109. Mg(2+) is bound by residues Ser-109, Asp-248, Asp-250, and Asp-252. The residue at position 109 (Ser-109) is a Phosphoserine.

It belongs to the phosphohexose mutase family. Requires Mg(2+) as cofactor. Activated by phosphorylation.

It carries out the reaction alpha-D-glucosamine 1-phosphate = D-glucosamine 6-phosphate. Catalyzes the conversion of glucosamine-6-phosphate to glucosamine-1-phosphate. In Erythrobacter litoralis (strain HTCC2594), this protein is Phosphoglucosamine mutase.